A 694-amino-acid chain; its full sequence is NADPH--cytochrome P450 reductase (694 aa).

Residues 1-8 are Lumenal-facing; the sequence is MAQLDTLD. Residues 9–31 form a helical membrane-spanning segment; that stretch reads LVVLAVLLVGSVAYFTKGTYWAV. Residues 32 to 694 are Cytoplasmic-facing; sequence AKDPYASTGP…RGRYQEDVWS (663 aa). The 155-residue stretch at 66-220 folds into the Flavodoxin-like domain; it reads CVIFYGSQTG…DFLAWKEPMW (155 aa). Residues 72–77, 123–126, 168–177, and Asp-203 contribute to the FMN site; these read SQTGTA, ATYG, and LGNNTYEHYN. In terms of domain architecture, FAD-binding FR-type spans 276-537; the sequence is HNPFIAPIAE…HVRHSNFKLP (262 aa). Arg-295 serves as a coordination point for NADP(+). FAD contacts are provided by residues 450–453, 468–470, and 485–488; these read RYYS, TAV, and GVTT. NADP(+) contacts are provided by residues Thr-551, 613-614, 619-623, and Glu-655; these read SR and KVYVQ. Trp-693 contacts FAD.

It belongs to the NADPH--cytochrome P450 reductase family. This sequence in the N-terminal section; belongs to the flavodoxin family. The protein in the C-terminal section; belongs to the flavoprotein pyridine nucleotide cytochrome reductase family. It depends on FAD as a cofactor. FMN is required as a cofactor.

It localises to the endoplasmic reticulum membrane. It is found in the mitochondrion outer membrane. Its subcellular location is the cell membrane. It catalyses the reaction 2 oxidized [cytochrome P450] + NADPH = 2 reduced [cytochrome P450] + NADP(+) + H(+). Its function is as follows. This enzyme is required for electron transfer from NADP to cytochrome P450 in microsomes. It can also provide electron transfer to heme oxygenase and cytochrome B5. Involved in ergosterol biosynthesis. This Aspergillus niger protein is NADPH--cytochrome P450 reductase.